Reading from the N-terminus, the 467-residue chain is Signal transduction histidine-protein kinase BaeS (467 aa).

At 1–11 (MKFWRPGITGK) the chain is on the cytoplasmic side. A helical transmembrane segment spans residues 12–32 (LFLAIFATCIVLLISMHWAVR). Over 33-167 (ISFERGFIDY…NFDKQQRQTS (135 aa)) the chain is Periplasmic. A helical transmembrane segment spans residues 168-186 (WLIVALATLLAALATFLLA). The HAMP domain occupies 187-239 (RGLLAPVKRLVDGTHKLAAGDFTTRVTPTSEDELGKLAQDFNQLASTLEKNQQ). At 187–467 (RGLLAPVKRL…PLERDLQREV (281 aa)) the chain is on the cytoplasmic side. Positions 247–461 (DISHELRTPL…SITVELPLER (215 aa)) constitute a Histidine kinase domain. Residue His-250 is modified to Phosphohistidine; by autocatalysis.

Autophosphorylated.

It localises to the cell inner membrane. It carries out the reaction ATP + protein L-histidine = ADP + protein N-phospho-L-histidine.. In terms of biological role, member of the two-component regulatory system BaeS/BaeR which responds to envelope stress. Activates expression of periplasmic chaperone spy in response to spheroplast formation, indole and P pili protein PapG overexpression. Activates BaeR by phosphorylation which then activates the mdtABCD and probably the CRISPR-Cas casABCDE-ygbT-ygbF operons. The protein is Signal transduction histidine-protein kinase BaeS of Escherichia coli (strain K12).